Reading from the N-terminus, the 485-residue chain is Pyruvate kinase (485 aa).

Position 33 (Arg-33) interacts with substrate. Residues Asn-35, Ser-37, Asp-67, and Thr-68 each coordinate K(+). Residue 35-38 participates in ATP binding; the sequence is NFSH. ATP is bound by residues Arg-74 and Lys-155. Glu-221 provides a ligand contact to Mg(2+). Residues Gly-244, Asp-245, and Thr-277 each contribute to the substrate site. A Mg(2+)-binding site is contributed by Asp-245.

It belongs to the pyruvate kinase family. Homotetramer. Mg(2+) is required as a cofactor. It depends on K(+) as a cofactor.

The enzyme catalyses pyruvate + ATP = phosphoenolpyruvate + ADP + H(+). Its pathway is carbohydrate degradation; glycolysis; pyruvate from D-glyceraldehyde 3-phosphate: step 5/5. The sequence is that of Pyruvate kinase (pyk) from Chlamydia trachomatis serovar D (strain ATCC VR-885 / DSM 19411 / UW-3/Cx).